Here is a 909-residue protein sequence, read N- to C-terminus: MERAMEQLNRLTRSLRRARTVELPEDNETAVYTLMPMVMADQHRSVSELLSNSKFDVNYAFGRVKRSLLHIAANCGSVECLVLLLKKGANPNYQDISGCTPLHLAARNGQKKCMSKLLEYSADVNICNNEGLTAIHWLAVNGRTELLHDLVQHVSDVDVEDAMGQTALHVACQNGHKTTVQCLLDSGADINRPNVSGATPLYFACSHGQRDTAQILLLRGAKYLPDKNGVTPLDLCVQGGYGETCEVLIQYHPRLFQTIIQMTQNEDLRENMLRQVLEHLSQQSESQYLKILTSLAEVATTNGHKLLSLSSNYDAQMKSLLRIVRMFCHVFRIGPSSPSNGIDMGYNGNKTPRSQVFKPLELLWHSLDEWLVLIATELMKNKRDSTEITSILLKQKGQDQDAASIPPFEPPGPGSYENLSTGTRESKPDALAGRQEASADCQDVISMTANRLSAVIQAFYMCCSCQMPPGMTSPRFIEFVCKHDEVLKCFVNRNPKIIFDHFHFLLECPELMSRFMHIIKAQPFKDRCEWFYEHLHSGQPDSDMVHRPVNENDILLVHRDSIFRSSCEVVSKANCAKLKQGIAVRFHGEEGMGQGVVREWFDILSNEIVNPDYALFTQSADGTTFQPNSNSYVNPDHLNYFRFAGQILGLALNHRQLVNIYFTRSFYKHILGIPVNYQDVASIDPEYAKNLQWILDNDISDLGLELTFSVETDVFGAMEEVPLKPGGGSILVTQNNKAEYVQLVTELRMTRAIQPQINAFLQGFHMFIPPSLIQLFDEYELELLLSGMPEIDVSDWIKNTEYTSGYEREDPVIQWFWEVVEDITQEERVLLLQFVTGSSRVPHGGFANIMGGSGLQNFTIAAVPYTPNLLPTSSTCINMLKLPEYPSKEILKDRLLVALHCGSYGYTMA.

Positions 1 to 21 (MERAMEQLNRLTRSLRRARTV) are N-terminal helix important for homodimerization. ANK repeat units follow at residues 23–55 (LPED…NSKF), 64–93 (VKRS…NPNY), 97–126 (SGCT…DVNI), 130–159 (EGLT…DVDV), 163–192 (MGQT…DINR), 196–226 (SGAT…YLPD), and 228–253 (NGVT…QYHP). A disordered region spans residues 398-433 (QDQDAASIPPFEPPGPGSYENLSTGTRESKPDALAG). The HECT domain occupies 574–909 (NCAKLKQGIA…HCGSYGYTMA (336 aa)). The active-site Glycyl thioester intermediate is the Cys876.

In terms of assembly, homodimer. The homodimer is autoinhibited and stabilized by its N-terminal helix. Interacts with RAB1 (RAB1A, RAB1B or RAB1C), RAB4 (RAB4A or RAB4B) and RAB11 (RAB11A or RAB11B); in a GTP-dependent manner. Interacts with the 26S proteasomal complex through the 20S core proteasomal subunit. Interacts with RARB. Autoubiquitinated. As to expression, expressed in multiple tissues including heart, brain and kidney.

It is found in the golgi apparatus. The protein resides in the golgi stack membrane. The protein localises to the cytoplasm. Its subcellular location is the endoplasmic reticulum. It carries out the reaction S-ubiquitinyl-[E2 ubiquitin-conjugating enzyme]-L-cysteine + [acceptor protein]-L-lysine = [E2 ubiquitin-conjugating enzyme]-L-cysteine + N(6)-ubiquitinyl-[acceptor protein]-L-lysine.. The protein operates within protein modification; protein ubiquitination. Its activity is regulated as follows. Sterically autoinhibited in its dimeric state. Functionally, E3 ubiquitin-protein ligase involved in Golgi membrane fusion and regulation of small GTPases. Acts as a regulator of Golgi membrane dynamics during the cell cycle: recruited to Golgi membrane by Rab proteins and regulates postmitotic Golgi membrane fusion. Acts by mediating ubiquitination during mitotic Golgi disassembly, ubiquitination serving as a signal for Golgi reassembly later, after cell division. Specifically binds GTP-bound RAC1, mediating ubiquitination and subsequent degradation of active RAC1, thereby playing a role in host defense against pathogens. May also act as a transcription regulator via its interaction with RARB. The sequence is that of E3 ubiquitin-protein ligase HACE1 (HACE1) from Homo sapiens (Human).